The following is a 540-amino-acid chain: Zinc metalloproteinase nas-10 (540 aa).

The 208-residue stretch at 293 to 500 (ASIFFEQNLI…VEILNKMYCK (208 aa)) folds into the Peptidase M12A domain. 5 disulfides stabilise this stretch: C339-C499, C365-C385, C504-C540, C511-C533, and C520-C537. Zn(2+) is bound at residue H394. The active site involves E395. H398 and H404 together coordinate Zn(2+). Positions 504–540 (CDDKNVYCGAWALQDLCNNPNHNVWMRSNCRKSCNFC) constitute a ShKT domain.

It depends on Zn(2+) as a cofactor.

In terms of biological role, metalloprotease. The protein is Zinc metalloproteinase nas-10 of Caenorhabditis elegans.